The chain runs to 328 residues: Tetraacyldisaccharide 4'-kinase (328 aa).

Residue 55–62 (TAGGNGKT) participates in ATP binding.

It belongs to the LpxK family.

It catalyses the reaction a lipid A disaccharide + ATP = a lipid IVA + ADP + H(+). The protein operates within glycolipid biosynthesis; lipid IV(A) biosynthesis; lipid IV(A) from (3R)-3-hydroxytetradecanoyl-[acyl-carrier-protein] and UDP-N-acetyl-alpha-D-glucosamine: step 6/6. Transfers the gamma-phosphate of ATP to the 4'-position of a tetraacyldisaccharide 1-phosphate intermediate (termed DS-1-P) to form tetraacyldisaccharide 1,4'-bis-phosphate (lipid IVA). In Escherichia coli O81 (strain ED1a), this protein is Tetraacyldisaccharide 4'-kinase.